The following is a 584-amino-acid chain: Pescadillo homolog (584 aa).

A required for 28S ribosomal RNA processing region spans residues 1–54 (MGGLEKKKYERGSATNYITRNKARKKLQLSLPDFRRLCILKGIYPHEPKHKKKV). The segment at 1-257 (MGGLEKKKYE…PKLEGQAQAE (257 aa)) is sufficient for nucleolar localization. K98 carries the post-translational modification N6-acetyllysine. Positions 312–414 (RKKELEAQEK…LLLPVAEYFP (103 aa)) are sufficient for interaction with MAP1B. Residues 321-414 (KHKKLFEGLK…LLLPVAEYFP (94 aa)) form the BRCT domain. Positions 449–510 (DPGHLEEEEE…EEKKPQVMAG (62 aa)) are disordered. Positions 454-489 (EEEEEEDEDDDNEGDVAAENEEEDVEVESEEEEEEE) are enriched in acidic residues. The span at 496–505 (EQHRLEEKKP) shows a compositional bias: basic and acidic residues. K513 participates in a covalent cross-link: Glycyl lysine isopeptide (Lys-Gly) (interchain with G-Cter in SUMO1); alternate. K513 is covalently cross-linked (Glycyl lysine isopeptide (Lys-Gly) (interchain with G-Cter in SUMO2); alternate). The segment at 535–584 (MMKKREKYLYQKIMFGKRRKIREANKLAEKRKAHDDAVRSEKKAKRTRPV) is required for 28S ribosomal RNA processing. Residues 560-575 (KLAEKRKAHDDAVRSE) show a composition bias toward basic and acidic residues. Positions 560 to 584 (KLAEKRKAHDDAVRSEKKAKRTRPV) are disordered.

Belongs to the pescadillo family. Component of the PeBoW complex, composed of BOP1, PES1 and WDR12. The complex is held together by BOP1, which interacts with PES1 via its N-terminal domain and with WDR12 via a high-affinity interaction between the seven-bladed beta-propeller domains of the 2 proteins. The PeBoW complex associates with the 66S pre-ribosome. The PeBoW complex also associates with DDX27, PES1 interacts directly with DDX27. Interacts with IRS1 and UBTF. May interact with MAP1B. Sumoylated. As to expression, ubiquitous. Highest levels appear to be found in tissues that contain a population of proliferating cells, such as ovary and testis. Also appears to be highly expressed in kidney and liver. In the brain expression is restricted to neural progenitor cells and postmitotic neurons. Highly expressed in malignant astrocytes.

It localises to the nucleus. The protein localises to the nucleolus. Its subcellular location is the nucleoplasm. The protein resides in the chromosome. Component of the PeBoW complex, which is required for maturation of 28S and 5.8S ribosomal RNAs and formation of the 60S ribosome. The polypeptide is Pescadillo homolog (Pes1) (Mus musculus (Mouse)).